Reading from the N-terminus, the 623-residue chain is uncharacterized protein (623 aa).

Residues 256–351 adopt a coiled-coil conformation; the sequence is AEEKLLSKNK…EEIHGLKKKN (96 aa). 2 disordered regions span residues 417–485 and 497–536; these read NRRN…SPSS and ALSS…ECAT. Over residues 422–431 the composition is skewed to polar residues; it reads LESVPFNTLS. Over residues 452-481 the composition is skewed to basic and acidic residues; that stretch reads ELKKPAESYGDETKKPNQHNKDGSIDEKPK.

This is an uncharacterized protein from Arabidopsis thaliana (Mouse-ear cress).